A 533-amino-acid polypeptide reads, in one-letter code: Probable protein kinase UbiB (533 aa).

The helical transmembrane segment at 24–44 (LILELPMLPWWLRLLGATLPW) threads the bilayer. The Protein kinase domain occupies 126 to 494 (RFEREPLASA…WKGSRHDWLG (369 aa)). ATP-binding positions include 132–140 (LASASVAQV) and Lys-154. Residue Asp-289 is the Proton acceptor of the active site. The helical transmembrane segment at 510-530 (LGQQLEAWPAWVMLAGGVFLI) threads the bilayer.

Belongs to the ABC1 family. UbiB subfamily.

It localises to the cell inner membrane. It functions in the pathway cofactor biosynthesis; ubiquinone biosynthesis [regulation]. Its function is as follows. Is probably a protein kinase regulator of UbiI activity which is involved in aerobic coenzyme Q (ubiquinone) biosynthesis. This chain is Probable protein kinase UbiB, found in Pseudomonas aeruginosa (strain UCBPP-PA14).